The chain runs to 56 residues: Large ribosomal subunit protein bL33 (56 aa).

The protein belongs to the bacterial ribosomal protein bL33 family.

This chain is Large ribosomal subunit protein bL33, found in Halorhodospira halophila (strain DSM 244 / SL1) (Ectothiorhodospira halophila (strain DSM 244 / SL1)).